Here is a 171-residue protein sequence, read N- to C-terminus: O-acetyl-ADP-ribose deacetylase 1 (171 aa).

One can recognise a Macro domain in the interval 1–171 (MKKITVIQGD…NYDLYLKLLN (171 aa)). Substrate is bound by residues 10–11 (DI), Asn24, 32–34 (GVD), and 121–125 (STGIY). Asp34 functions as the Proton acceptor in the catalytic mechanism.

This sequence belongs to the MacroD-type family. YmdB subfamily. Homodimer. Interacts with RNase III.

The catalysed reaction is 3''-O-acetyl-ADP-D-ribose + H2O = ADP-D-ribose + acetate + H(+). The enzyme catalyses 2''-O-acetyl-ADP-D-ribose + H2O = ADP-D-ribose + acetate + H(+). Its function is as follows. Deacetylates O-acetyl-ADP ribose to yield ADP-ribose and free acetate. Down-regulates ribonuclease 3 (RNase III) activity. Acts by interacting directly with the region of the ribonuclease that is required for dimerization/activation. The sequence is that of O-acetyl-ADP-ribose deacetylase 1 from Pantoea vagans (strain C9-1) (Pantoea agglomerans (strain C9-1)).